Reading from the N-terminus, the 154-residue chain is Methylglyoxal synthase (154 aa).

Positions 6-154 (QSLPAKKNIA…KYLATRQIDI (149 aa)) constitute an MGS-like domain. Substrate-binding positions include His-19, Lys-23, 45 to 48 (TGTT), and 65 to 66 (SG). Catalysis depends on Asp-71, which acts as the Proton donor/acceptor. His-98 is a substrate binding site.

This sequence belongs to the methylglyoxal synthase family.

It catalyses the reaction dihydroxyacetone phosphate = methylglyoxal + phosphate. Catalyzes the formation of methylglyoxal from dihydroxyacetone phosphate. This chain is Methylglyoxal synthase, found in Pseudoalteromonas translucida (strain TAC 125).